A 93-amino-acid polypeptide reads, in one-letter code: YcgL domain-containing protein Shal_1837 (93 aa).

The region spanning 1-85 (MICAVYKSRR…PVVNLLEQHK (85 aa)) is the YcgL domain.

In Shewanella halifaxensis (strain HAW-EB4), this protein is YcgL domain-containing protein Shal_1837.